Consider the following 651-residue polypeptide: Probable ATP-dependent helicase MJ0942 (651 aa).

A Helicase ATP-binding domain is found at 6 to 255 (YIKEKFPYPK…EIIEKYLTSR (250 aa)). 41–48 (APTGVGKT) contributes to the ATP binding site. The [4Fe-4S] cluster site is built by cysteine 102, cysteine 149, and cysteine 154. The short motif at 195–198 (DEAH) is the DEAH box element. The Helicase C-terminal domain occupies 449-638 (NLLKILEAIN…NYEVMSLDMA (190 aa)).

Belongs to the helicase family. DinG subfamily. Requires [4Fe-4S] cluster as cofactor.

The enzyme catalyses Couples ATP hydrolysis with the unwinding of duplex DNA at the replication fork by translocating in the 5'-3' direction. This creates two antiparallel DNA single strands (ssDNA). The leading ssDNA polymer is the template for DNA polymerase III holoenzyme which synthesizes a continuous strand.. It catalyses the reaction ATP + H2O = ADP + phosphate + H(+). In terms of biological role, might be a 5'-3' DNA helicase. In Methanocaldococcus jannaschii (strain ATCC 43067 / DSM 2661 / JAL-1 / JCM 10045 / NBRC 100440) (Methanococcus jannaschii), this protein is Probable ATP-dependent helicase MJ0942.